Here is a 512-residue protein sequence, read N- to C-terminus: Maturase K (512 aa).

Belongs to the intron maturase 2 family. MatK subfamily.

The protein localises to the plastid. It is found in the chloroplast. Usually encoded in the trnK tRNA gene intron. Probably assists in splicing its own and other chloroplast group II introns. This is Maturase K from Amorphophallus titanum (Titan arum).